Reading from the N-terminus, the 163-residue chain is Nucleotide-binding protein Ava_2001 (163 aa).

The protein belongs to the YajQ family.

Nucleotide-binding protein. This chain is Nucleotide-binding protein Ava_2001, found in Trichormus variabilis (strain ATCC 29413 / PCC 7937) (Anabaena variabilis).